A 710-amino-acid polypeptide reads, in one-letter code: Protein-glutamine gamma-glutamyltransferase Z (710 aa).

Catalysis depends on residues Cys279, His338, and Asp361. Asn401, Asp403, Glu450, and Glu455 together coordinate Ca(2+).

This sequence belongs to the transglutaminase superfamily. Transglutaminase family. Requires Ca(2+) as cofactor. In terms of tissue distribution, widely expressed.

It catalyses the reaction L-glutaminyl-[protein] + L-lysyl-[protein] = [protein]-L-lysyl-N(6)-5-L-glutamyl-[protein] + NH4(+). Its function is as follows. Catalyzes the cross-linking of proteins and the conjugation of polyamines to proteins. The polypeptide is Protein-glutamine gamma-glutamyltransferase Z (TGM7) (Homo sapiens (Human)).